The sequence spans 165 residues: Protein SprT (165 aa).

In terms of domain architecture, SprT-like spans 22 to 163 (LAQANLKLGC…RCVHCGEQLV (142 aa)). His-78 lines the Zn(2+) pocket. Residue Glu-79 is part of the active site. Position 82 (His-82) interacts with Zn(2+).

This sequence belongs to the SprT family. Requires Zn(2+) as cofactor.

It localises to the cytoplasm. This chain is Protein SprT, found in Shigella dysenteriae serotype 1 (strain Sd197).